Reading from the N-terminus, the 53-residue chain is Reg12l (53 aa).

A propeptide spanning residues 1-34 (RVLFRSGDQPADQPAERMQDISPEQNPLFHPDKR) is cleaved from the precursor. 3 cysteine pairs are disulfide-bonded: Cys36/Cys50, Cys37/Cys48, and Cys42/Cys51.

This sequence belongs to the conotoxin M superfamily. As to expression, expressed by the venom duct.

It is found in the secreted. The chain is Reg12l from Conus regius (Crown cone).